The chain runs to 338 residues: Glycerol-3-phosphate dehydrogenase [NAD(P)+] (338 aa).

Residues serine 14, tyrosine 15, histidine 35, and lysine 109 each contribute to the NADPH site. Sn-glycerol 3-phosphate-binding residues include lysine 109, glycine 138, and threonine 140. Residue alanine 142 coordinates NADPH. Lysine 194, aspartate 247, serine 257, arginine 258, and asparagine 259 together coordinate sn-glycerol 3-phosphate. The active-site Proton acceptor is lysine 194. Arginine 258 lines the NADPH pocket. Positions 282 and 284 each coordinate NADPH.

This sequence belongs to the NAD-dependent glycerol-3-phosphate dehydrogenase family.

It localises to the cytoplasm. The catalysed reaction is sn-glycerol 3-phosphate + NAD(+) = dihydroxyacetone phosphate + NADH + H(+). It carries out the reaction sn-glycerol 3-phosphate + NADP(+) = dihydroxyacetone phosphate + NADPH + H(+). It participates in membrane lipid metabolism; glycerophospholipid metabolism. Functionally, catalyzes the reduction of the glycolytic intermediate dihydroxyacetone phosphate (DHAP) to sn-glycerol 3-phosphate (G3P), the key precursor for phospholipid synthesis. This chain is Glycerol-3-phosphate dehydrogenase [NAD(P)+], found in Shewanella sp. (strain MR-4).